Reading from the N-terminus, the 269-residue chain is Putative pyruvate, phosphate dikinase regulatory protein (269 aa).

Residue 151–158 participates in ADP binding; that stretch reads GVSRSSKT.

Belongs to the pyruvate, phosphate/water dikinase regulatory protein family. PDRP subfamily.

It catalyses the reaction N(tele)-phospho-L-histidyl/L-threonyl-[pyruvate, phosphate dikinase] + ADP = N(tele)-phospho-L-histidyl/O-phospho-L-threonyl-[pyruvate, phosphate dikinase] + AMP + H(+). The catalysed reaction is N(tele)-phospho-L-histidyl/O-phospho-L-threonyl-[pyruvate, phosphate dikinase] + phosphate + H(+) = N(tele)-phospho-L-histidyl/L-threonyl-[pyruvate, phosphate dikinase] + diphosphate. Bifunctional serine/threonine kinase and phosphorylase involved in the regulation of the pyruvate, phosphate dikinase (PPDK) by catalyzing its phosphorylation/dephosphorylation. The sequence is that of Putative pyruvate, phosphate dikinase regulatory protein from Geobacter metallireducens (strain ATCC 53774 / DSM 7210 / GS-15).